The following is a 392-amino-acid chain: GTPase Obg (392 aa).

One can recognise an Obg domain in the interval 1-159 (MKFVDEAEIR…RNLKLELMLL (159 aa)). Residues 121-146 (GFHGLGNTRFKSSTNRAPRQKTNGTP) form a disordered region. Positions 129-145 (RFKSSTNRAPRQKTNGT) are enriched in polar residues. Residues 160-333 (ADVGLLGMPN…LCNDVMDFIE (174 aa)) enclose the OBG-type G domain. GTP-binding positions include 166 to 173 (GMPNAGKS), 191 to 195 (FTTLV), 213 to 216 (DIPG), 283 to 286 (NKVD), and 314 to 316 (SAF). Mg(2+) is bound by residues Ser173 and Thr193.

This sequence belongs to the TRAFAC class OBG-HflX-like GTPase superfamily. OBG GTPase family. Monomer. Mg(2+) serves as cofactor.

The protein resides in the cytoplasm. An essential GTPase which binds GTP, GDP and possibly (p)ppGpp with moderate affinity, with high nucleotide exchange rates and a fairly low GTP hydrolysis rate. Plays a role in control of the cell cycle, stress response, ribosome biogenesis and in those bacteria that undergo differentiation, in morphogenesis control. In Alteromonas mediterranea (strain DSM 17117 / CIP 110805 / LMG 28347 / Deep ecotype), this protein is GTPase Obg.